The sequence spans 59 residues: Large ribosomal subunit protein bL32 (59 aa).

The protein belongs to the bacterial ribosomal protein bL32 family.

The sequence is that of Large ribosomal subunit protein bL32 from Lactiplantibacillus plantarum (strain ATCC BAA-793 / NCIMB 8826 / WCFS1) (Lactobacillus plantarum).